The chain runs to 471 residues: Ribulose bisphosphate carboxylase large chain (471 aa).

Substrate is bound by residues N115 and T165. K167 functions as the Proton acceptor in the catalytic mechanism. K169 provides a ligand contact to substrate. Residues K193, D195, and E196 each coordinate Mg(2+). An N6-carboxylysine modification is found at K193. H286 (proton acceptor) is an active-site residue. Substrate contacts are provided by R287, H319, and S371.

The protein belongs to the RuBisCO large chain family. Type I subfamily. In terms of assembly, heterohexadecamer of 8 large chains and 8 small chains. Forms a CsoS2-CsoS1-RuBisCO complex. The cofactor is Mg(2+).

Its subcellular location is the carboxysome. It catalyses the reaction 2 (2R)-3-phosphoglycerate + 2 H(+) = D-ribulose 1,5-bisphosphate + CO2 + H2O. It carries out the reaction D-ribulose 1,5-bisphosphate + O2 = 2-phosphoglycolate + (2R)-3-phosphoglycerate + 2 H(+). Its function is as follows. RuBisCO catalyzes two reactions: the carboxylation of D-ribulose 1,5-bisphosphate, the primary event in carbon dioxide fixation, as well as the oxidative fragmentation of the pentose substrate in the photorespiration process. Both reactions occur simultaneously and in competition at the same active site. This chain is Ribulose bisphosphate carboxylase large chain, found in Parasynechococcus marenigrum (strain WH8102).